The chain runs to 285 residues: Probable endonuclease 4 (285 aa).

His-67, His-107, Glu-144, Asp-177, His-180, His-214, Asp-227, His-229, and Glu-259 together coordinate Zn(2+).

The protein belongs to the AP endonuclease 2 family. Zn(2+) serves as cofactor.

The catalysed reaction is Endonucleolytic cleavage to 5'-phosphooligonucleotide end-products.. In terms of biological role, endonuclease IV plays a role in DNA repair. It cleaves phosphodiester bonds at apurinic or apyrimidinic (AP) sites, generating a 3'-hydroxyl group and a 5'-terminal sugar phosphate. The polypeptide is Probable endonuclease 4 (Persephonella marina (strain DSM 14350 / EX-H1)).